The primary structure comprises 220 residues: Phosphoribosylformylglycinamidine synthase subunit PurQ (220 aa).

A Glutamine amidotransferase type-1 domain is found at Arg-2–Val-220. Cys-85 functions as the Nucleophile in the catalytic mechanism. Catalysis depends on residues His-193 and Glu-195.

As to quaternary structure, part of the FGAM synthase complex composed of 1 PurL, 1 PurQ and 2 PurS subunits.

The protein resides in the cytoplasm. It catalyses the reaction N(2)-formyl-N(1)-(5-phospho-beta-D-ribosyl)glycinamide + L-glutamine + ATP + H2O = 2-formamido-N(1)-(5-O-phospho-beta-D-ribosyl)acetamidine + L-glutamate + ADP + phosphate + H(+). The enzyme catalyses L-glutamine + H2O = L-glutamate + NH4(+). It functions in the pathway purine metabolism; IMP biosynthesis via de novo pathway; 5-amino-1-(5-phospho-D-ribosyl)imidazole from N(2)-formyl-N(1)-(5-phospho-D-ribosyl)glycinamide: step 1/2. Functionally, part of the phosphoribosylformylglycinamidine synthase complex involved in the purines biosynthetic pathway. Catalyzes the ATP-dependent conversion of formylglycinamide ribonucleotide (FGAR) and glutamine to yield formylglycinamidine ribonucleotide (FGAM) and glutamate. The FGAM synthase complex is composed of three subunits. PurQ produces an ammonia molecule by converting glutamine to glutamate. PurL transfers the ammonia molecule to FGAR to form FGAM in an ATP-dependent manner. PurS interacts with PurQ and PurL and is thought to assist in the transfer of the ammonia molecule from PurQ to PurL. The protein is Phosphoribosylformylglycinamidine synthase subunit PurQ of Rubrobacter xylanophilus (strain DSM 9941 / JCM 11954 / NBRC 16129 / PRD-1).